We begin with the raw amino-acid sequence, 486 residues long: Glutamyl-tRNA(Gln) amidotransferase subunit A (486 aa).

Residues K77 and S152 each act as charge relay system in the active site. S176 acts as the Acyl-ester intermediate in catalysis.

This sequence belongs to the amidase family. GatA subfamily. Heterotrimer of A, B and C subunits.

It carries out the reaction L-glutamyl-tRNA(Gln) + L-glutamine + ATP + H2O = L-glutaminyl-tRNA(Gln) + L-glutamate + ADP + phosphate + H(+). In terms of biological role, allows the formation of correctly charged Gln-tRNA(Gln) through the transamidation of misacylated Glu-tRNA(Gln) in organisms which lack glutaminyl-tRNA synthetase. The reaction takes place in the presence of glutamine and ATP through an activated gamma-phospho-Glu-tRNA(Gln). The chain is Glutamyl-tRNA(Gln) amidotransferase subunit A from Lactococcus lactis subsp. cremoris (strain SK11).